The sequence spans 543 residues: MTPGELRRLYLIVRVFLSYGLDELIPQMRLTLPLRVGRRLLFWMPNRHADKPLGERLRLALQELGPVWIKFGQMMSTRRDLFPPQIADQLTLLQDRVAPFDGALARKHIELAMGGPLETWFDDFDQQALASASIAQVHTARLKTTGQEVVLKVIRPDIRPIIKADVRLMYRLAAWVPKLMPDGRRLRPREVVREYEKTLLDELNLLREAANAIQLRRNFDGSPMLYVPEVYSDYCRESVLVMERIYGIPVSDIPTLEKQGTNMKLLAERGVQVFFTQVFRDSFFHADMHPGNIFVSYEHPEDPCYIGIDCGIVGSLNKDDKRYLAENFIAFFNRDYRKVAELHVDSGWVPRDTNVEDFEFAIRTVCEPIFEKPLSEISFGNVLLNLFNTARRFNMEVQPQLVLLQKTLLYVEGLGRQLYPQLDLWTTAKPFLESWMRDQVGIPAVIRALKEKAPFWAEKLPELPELFYDSLQQHKLLQQSVDKLTNQMQAQRVRQGQSRYLFGVGATLLVSGTILLSGDVEVFPAWLIAAGIVSWVIGWKRTT.

The region spanning 123–501 (DFDQQALASA…RVRQGQSRYL (379 aa)) is the Protein kinase domain. ATP is bound by residues 129–137 (LASASIAQV) and Lys-152. Asp-287 acts as the Proton acceptor in catalysis. 2 helical membrane-spanning segments follow: residues 498 to 518 (SRYL…LLSG) and 519 to 539 (DVEV…VIGW).

It belongs to the ABC1 family. UbiB subfamily.

The protein localises to the cell inner membrane. Its pathway is cofactor biosynthesis; ubiquinone biosynthesis [regulation]. In terms of biological role, is probably a protein kinase regulator of UbiI activity which is involved in aerobic coenzyme Q (ubiquinone) biosynthesis. The polypeptide is Probable protein kinase UbiB (Serratia proteamaculans (strain 568)).